A 1017-amino-acid polypeptide reads, in one-letter code: Integrator complex subunit 3 (1017 aa).

Residues 952 to 1017 (EYEDSSKPPK…KGSAVGSDSD (66 aa)) are disordered. Residues 983–997 (NEEESVSSSASEEED) show a composition bias toward acidic residues.

It belongs to the Integrator subunit 3 family. As to quaternary structure, component of the Integrator complex, composed of core subunits INTS1, INTS2, INTS3, INTS4, INTS5, INTS6, INTS7, INTS8, INTS9/RC74, INTS10, INTS11/CPSF3L, INTS12, INTS13, INTS14 and INTS15. The core complex associates with protein phosphatase 2A subunits PPP2CA and PPP2R1A, to form the Integrator-PP2A (INTAC) complex. Component of the SOSS complex.

Its subcellular location is the nucleus. The protein localises to the cytoplasm. In terms of biological role, component of the integrator complex, a multiprotein complex that terminates RNA polymerase II (Pol II) transcription in the promoter-proximal region of genes. The integrator complex provides a quality checkpoint during transcription elongation by driving premature transcription termination of transcripts that are unfavorably configured for transcriptional elongation: the complex terminates transcription by (1) catalyzing dephosphorylation of the C-terminal domain (CTD) of Pol II subunit POLR2A/RPB1 and SUPT5H/SPT5, (2) degrading the exiting nascent RNA transcript via endonuclease activity and (3) promoting the release of Pol II from bound DNA. The integrator complex is also involved in terminating the synthesis of non-coding Pol II transcripts, such as enhancer RNAs (eRNAs), small nuclear RNAs (snRNAs), telomerase RNAs and long non-coding RNAs (lncRNAs). Within the integrator complex, INTS3 is involved in the post-termination step: INTS3 binds INTS7 in the open conformation of integrator complex and prevents the rebinding of Pol II to the integrator after termination cycle. Its function is as follows. Component of the SOSS complex, a multiprotein complex that functions downstream of the MRN complex to promote DNA repair and G2/M checkpoint. The SOSS complex associates with single-stranded DNA at DNA lesions and influences diverse endpoints in the cellular DNA damage response including cell-cycle checkpoint activation, recombinational repair and maintenance of genomic stability. The SOSS complex is required for efficient homologous recombination-dependent repair of double-strand breaks (DSBs) and ATM-dependent signaling pathways. In the SOSS complex, it is required for the assembly of the complex and for stabilization of the complex at DNA damage sites. The protein is Integrator complex subunit 3 (ints3) of Danio rerio (Zebrafish).